We begin with the raw amino-acid sequence, 435 residues long: Xylose isomerase (435 aa).

Catalysis depends on residues His-99 and Asp-102. Residues Glu-230, Glu-266, His-269, Asp-294, Asp-305, Asp-307, and Asp-337 each coordinate Mg(2+).

This sequence belongs to the xylose isomerase family. Homotetramer. The cofactor is Mg(2+).

Its subcellular location is the cytoplasm. It carries out the reaction alpha-D-xylose = alpha-D-xylulofuranose. This is Xylose isomerase from Enterococcus faecalis (strain ATCC 700802 / V583).